The primary structure comprises 360 residues: Peptide chain release factor 1 (360 aa).

N5-methylglutamine is present on Gln235. Residues 284–293 (QRRQQEESST) are compositionally biased toward basic and acidic residues. Positions 284–311 (QRRQQEESSTRRNLLGSGDRSDRIRTYN) are disordered.

The protein belongs to the prokaryotic/mitochondrial release factor family. In terms of processing, methylated by PrmC. Methylation increases the termination efficiency of RF1.

It localises to the cytoplasm. In terms of biological role, peptide chain release factor 1 directs the termination of translation in response to the peptide chain termination codons UAG and UAA. The polypeptide is Peptide chain release factor 1 (Sodalis glossinidius (strain morsitans)).